The chain runs to 169 residues: Short form salivary protein D7R3 (169 aa).

An N-terminal signal peptide occupies residues 1-21 (MFGKLLPCAILVWCLFSLGQA). 3 disulfide bridges follow: C30–C62, C43–C168, and C101–C120. Positions 31 and 46 each coordinate noradrenaline. Residue E31 participates in serotonin binding. The serotonin site is built by H59, Y118, D135, and E138. Histamine contacts are provided by Y118, D135, and E138. The noradrenaline site is built by D135 and E138.

The protein belongs to the PBP/GOBP family. Female saliva (at protein level). Female salivary gland. Low-level expression in female carcass without salivary glands. Not detected in male tissues.

It is found in the secreted. Modulates blood feeding of female mosquitoes on vertebrate species by binding and sequestering different mediators involved in the host response. Binds serotonin, noradrenaline, histamine and adrenaline. Inhibits histamine-, serotonin- and noradrenaline-induced smooth muscle contraction. Exhibits vasodilating activity. The polypeptide is Short form salivary protein D7R3 (Anopheles gambiae (African malaria mosquito)).